We begin with the raw amino-acid sequence, 685 residues long: Polyphosphate kinase (685 aa).

Asparagine 45 contributes to the ATP binding site. Residues arginine 375 and arginine 405 each coordinate Mg(2+). Catalysis depends on histidine 435, which acts as the Phosphohistidine intermediate. ATP-binding residues include tyrosine 468, arginine 564, and histidine 592.

Belongs to the polyphosphate kinase 1 (PPK1) family. It depends on Mg(2+) as a cofactor. In terms of processing, an intermediate of this reaction is the autophosphorylated ppk in which a phosphate is covalently linked to a histidine residue through a N-P bond.

The enzyme catalyses [phosphate](n) + ATP = [phosphate](n+1) + ADP. Its function is as follows. Catalyzes the reversible transfer of the terminal phosphate of ATP to form a long-chain polyphosphate (polyP). The polypeptide is Polyphosphate kinase (Neisseria meningitidis serogroup C (strain 053442)).